A 204-amino-acid polypeptide reads, in one-letter code: Histone chaperone ASF1A (204 aa).

Residues 1–156 (MAKVQVNNVV…TRFHINWEDN (156 aa)) form an interaction with histone H3, CHAF1B, and HIRA region. Residues 31 to 37 (IEDLSED) carry the Required for interaction with HIRA motif. Residues 155 to 204 (DNTEKLEDAESSNPNLPSLLSTDALPSASKGWSTSENSLNVMLESHMDCM) form a required for interaction with HIRA region. Serine 192 is subject to Phosphoserine; by TLK2.

Belongs to the ASF1 family. As to quaternary structure, interacts with histone H3 (via C-terminus), including histone H3.1, H3.2 and H3.3, and histone H4; the interaction with H3 is direct. Probably interacts with the heterodimeric form of H3-H4 taking the place of the second dimer. Interacts with the CHAF1A, CHAF1B and RBBP4 subunits of the CAF-1 complex. Interacts with CABIN1, HAT1, HIRA, NASP, TAF1 and UBN1. Found in a soluble complex with NASP and histones H3 and H4; the interaction with NASP is probably indirect and mediated by H3-H4. Interacts with CDAN1. Found in a cytosolic complex with IPO4 and histones H3 and H4. Interacts with CREBBP. Post-translationally, phosphorylated by TLK1 and TLK2. Highly phosphorylated in S-phase and at lower levels in M-phase. TLK2-mediated phosphorylation at Ser-192 prevents proteasome-dependent degradation.

Its subcellular location is the nucleus. In terms of biological role, histone chaperone that facilitates histone deposition and histone exchange and removal during nucleosome assembly and disassembly. Cooperates with chromatin assembly factor 1 (CAF-1) to promote replication-dependent chromatin assembly and with HIRA to promote replication-independent chromatin assembly. Promotes homologous recombination-mediated repair of double-strand breaks (DSBs) at stalled or collapsed replication forks: acts by mediating histone replacement at DSBs, leading to recruitment of the MMS22L-TONSL complex and subsequent loading of RAD51. Also involved in the nuclear import of the histone H3-H4 dimer together with importin-4 (IPO4): specifically recognizes and binds newly synthesized histones with the monomethylation of H3 'Lys-9' and acetylation at 'Lys-14' (H3K9me1K14ac) marks, and diacetylation at 'Lys-5' and 'Lys-12' of H4 (H4K5K12ac) marks in the cytosol. Required for the formation of senescence-associated heterochromatin foci (SAHF) and efficient senescence-associated cell cycle exit. The sequence is that of Histone chaperone ASF1A (ASF1A) from Bos taurus (Bovine).